A 464-amino-acid polypeptide reads, in one-letter code: Spore coat protein SP65 (464 aa).

The N-terminal stretch at 1–17 is a signal peptide; it reads MKVLLLLVCLVFAYVNA. A Follistatin-like 1 domain is found at 21–43; the sequence is ACYNVVCPSNYQCRAEGDQAYCV. An N-linked (GlcNAc...) asparagine glycan is attached at N111. 2 Follistatin-like domains span residues 121–143 and 151–173; these read VCRD…PHCV and LCRV…PTCL. N-linked (GlcNAc...) asparagine glycosylation is present at N247. The interval 250–320 is disordered; that stretch reads STTGATTGAT…STTGAATTAP (71 aa).

Binds to the C-terminal region of pspB.

The protein localises to the spore wall. Forms a triad with cellulose and pspB that is essential for spore outer layer formation. In Dictyostelium discoideum (Social amoeba), this protein is Spore coat protein SP65 (cotE).